Here is a 517-residue protein sequence, read N- to C-terminus: MDFSSTIASQLNAGTILPEGIVIITLVGVLVGDLIFGRSSKSWLPYMAIIGLLASIVALYLAWDSPHPIGFLNSFNSDNLSIVFRAIIALSTAVTILMSIRYVEQTGTSLAEFIAIMLTATLGGMFLCGANELVMIFISLEMLSISSYLMTGYMKRDPRSNEAALKYLLIGASSSAIFLYGVSLLYGLSAGETALDAIATKIAAANGGESLGLAIALVFVIAGIAFKISAVPFHQWTPDVYEGSPTPVVAFLSVGSKAAGFALAIRLLVTAFASVGEEWHFVFTALAILSMVLGNVVALAQTSMKRMLAYSSIGQAGFVMIGLVAGTDAGYSSMVFYLLVYLFMNLGAFACIILFSLRTGTDKISEYAGLYQKDPLLTLALSICLLSLGGIPPLAGFFGKIYLFWAGWQAELYGLVILGLVTSVVSIYYYIRVVKMMVVKEPQEMSDAVKNYPQIRWNLPGMRPLQVGIVLTLIATSLAGILSNPLFTLANDSVTSTPILQSAIINTRISQVPTESK.

14 consecutive transmembrane segments (helical) span residues Ile16–Phe36, Trp43–Trp63, Leu80–Ile100, Leu110–Ala130, Leu133–Tyr153, Leu168–Leu188, Leu211–Val231, Pro245–Ile265, Trp279–Leu299, Met307–Thr327, Val335–Phe355, Leu379–Gly399, Ile401–Val421, and Val467–Phe487.

It belongs to the complex I subunit 2 family. In terms of assembly, NDH-1 can be composed of about 15 different subunits; different subcomplexes with different compositions have been identified which probably have different functions.

The protein resides in the cellular thylakoid membrane. The catalysed reaction is a plastoquinone + NADH + (n+1) H(+)(in) = a plastoquinol + NAD(+) + n H(+)(out). The enzyme catalyses a plastoquinone + NADPH + (n+1) H(+)(in) = a plastoquinol + NADP(+) + n H(+)(out). Its function is as follows. NDH-1 shuttles electrons from an unknown electron donor, via FMN and iron-sulfur (Fe-S) centers, to quinones in the respiratory and/or the photosynthetic chain. The immediate electron acceptor for the enzyme in this species is believed to be plastoquinone. Couples the redox reaction to proton translocation, and thus conserves the redox energy in a proton gradient. Cyanobacterial NDH-1 also plays a role in inorganic carbon-concentration. The sequence is that of NAD(P)H-quinone oxidoreductase subunit 2 from Rippkaea orientalis (strain PCC 8801 / RF-1) (Cyanothece sp. (strain PCC 8801)).